A 291-amino-acid chain; its full sequence is ATP synthase gamma chain (291 aa).

The protein belongs to the ATPase gamma chain family. As to quaternary structure, F-type ATPases have 2 components, CF(1) - the catalytic core - and CF(0) - the membrane proton channel. CF(1) has five subunits: alpha(3), beta(3), gamma(1), delta(1), epsilon(1). CF(0) has three main subunits: a, b and c.

Its subcellular location is the cell membrane. Produces ATP from ADP in the presence of a proton gradient across the membrane. The gamma chain is believed to be important in regulating ATPase activity and the flow of protons through the CF(0) complex. The chain is ATP synthase gamma chain from Streptococcus pyogenes serotype M3 (strain ATCC BAA-595 / MGAS315).